The primary structure comprises 355 residues: Phospho-N-acetylmuramoyl-pentapeptide-transferase (355 aa).

10 helical membrane passes run 14–34, 40–60, 84–104, 107–127, 147–167, 176–196, 205–225, 227–247, 268–290, and 334–354; these read PTGT…VVFF, LLIP…QVVP, GTPT…ALIW, FTPN…IGWL, LILQ…NQVS, LVIP…VAES, VDGL…IIIA, SHPD…GFIF, ALAA…GLFF, and TKIV…AIWS.

It belongs to the glycosyltransferase 4 family. MraY subfamily. Mg(2+) serves as cofactor.

The protein resides in the cell inner membrane. The enzyme catalyses UDP-N-acetyl-alpha-D-muramoyl-L-alanyl-gamma-D-glutamyl-meso-2,6-diaminopimeloyl-D-alanyl-D-alanine + di-trans,octa-cis-undecaprenyl phosphate = di-trans,octa-cis-undecaprenyl diphospho-N-acetyl-alpha-D-muramoyl-L-alanyl-D-glutamyl-meso-2,6-diaminopimeloyl-D-alanyl-D-alanine + UMP. It participates in cell wall biogenesis; peptidoglycan biosynthesis. Its function is as follows. Catalyzes the initial step of the lipid cycle reactions in the biosynthesis of the cell wall peptidoglycan: transfers peptidoglycan precursor phospho-MurNAc-pentapeptide from UDP-MurNAc-pentapeptide onto the lipid carrier undecaprenyl phosphate, yielding undecaprenyl-pyrophosphoryl-MurNAc-pentapeptide, known as lipid I. This Microcystis aeruginosa (strain NIES-843 / IAM M-2473) protein is Phospho-N-acetylmuramoyl-pentapeptide-transferase.